We begin with the raw amino-acid sequence, 377 residues long: MYIEKISLLNFKNYPELELSFSAGINLFAGLNGSGKTNLLDSIYCLCLTKSFLSTTDQQTITTGQGYFSALGWFQENAKEFKIQYDFDGKKKSFTVDKKPYAKISEHIGRFPAIVLTPHDTDLIRNSSEDRRRFFDTLFSQADHVYLDALIRYNHFIKQRNALLKQAADGMLVDRILMDAYDHNLLQSGKIIAQKRDEYLKRLLPIFQEYYSLLSPDHEATDIEYETNVLSADFEQVFKDSYSKDLILQRTNKGVHKDDFKFLINNEPIKHYGSQGQQKTFVIALKLAQYELLKACTGHNPILLMDDIFDKLDDLRIEKLIHLVQKYITGQLFISDARPDRSSIFFQSNTKDFRMFIIDRGKVEQSPPSQSELNTDV.

Position 30 to 37 (30 to 37 (GLNGSGKT)) interacts with ATP.

It belongs to the RecF family.

It is found in the cytoplasm. The RecF protein is involved in DNA metabolism; it is required for DNA replication and normal SOS inducibility. RecF binds preferentially to single-stranded, linear DNA. It also seems to bind ATP. The chain is DNA replication and repair protein RecF from Cytophaga hutchinsonii (strain ATCC 33406 / DSM 1761 / CIP 103989 / NBRC 15051 / NCIMB 9469 / D465).